Here is a 556-residue protein sequence, read N- to C-terminus: General transcription factor IIF subunit 1 (556 aa).

2 disordered regions span residues 82 to 128 and 226 to 499; these read TMTS…PAAA and SRLQ…PFTE. Residues 84 to 128 are compositionally biased toward low complexity; it reads TSAPNGTNSTGTTPNTTTTTTTTTTTTTTTTTAAGTPGAPNPAAA. Basic and acidic residues predominate over residues 245-275; it reads SGKKSIEELEEAEHRNRNEDPNRYKTTNEEK. 2 stretches are compositionally biased toward acidic residues: residues 291–338 and 378–394; these read GNGE…DVDL and GDDE…DQDD. Composition is skewed to basic and acidic residues over residues 415-427 and 450-461; these read VKKE…DSKS and NKSDSSVDNRES. Residues 469 to 492 show a composition bias toward low complexity; sequence SSPQAVQPNSPSQQQQQQQQNIDP.

It belongs to the TFIIF alpha subunit family. Heterodimer of an alpha and a beta subunit.

The protein resides in the nucleus. Functionally, TFIIF is a general transcription initiation factor that binds to RNA polymerase II and helps to recruit it to the initiation complex in collaboration with TFIIB. It promotes transcription elongation. This is General transcription factor IIF subunit 1 (gtf2f1) from Dictyostelium discoideum (Social amoeba).